The chain runs to 570 residues: Sulfite reductase [NADPH] hemoprotein beta-component (570 aa).

Residues cysteine 434, cysteine 440, cysteine 479, and cysteine 483 each coordinate [4Fe-4S] cluster. Cysteine 483 is a siroheme binding site.

Belongs to the nitrite and sulfite reductase 4Fe-4S domain family. In terms of assembly, alpha(8)-beta(8). The alpha component is a flavoprotein, the beta component is a hemoprotein. Siroheme is required as a cofactor. The cofactor is [4Fe-4S] cluster.

It catalyses the reaction hydrogen sulfide + 3 NADP(+) + 3 H2O = sulfite + 3 NADPH + 4 H(+). It participates in sulfur metabolism; hydrogen sulfide biosynthesis; hydrogen sulfide from sulfite (NADPH route): step 1/1. Its function is as follows. Component of the sulfite reductase complex that catalyzes the 6-electron reduction of sulfite to sulfide. This is one of several activities required for the biosynthesis of L-cysteine from sulfate. This is Sulfite reductase [NADPH] hemoprotein beta-component from Salmonella newport (strain SL254).